The following is a 248-amino-acid chain: uncharacterized protein (248 aa).

A signal peptide spans 1 to 26; it reads MVAPRISPKIVLVGFALFAIISASLA.

This is an uncharacterized protein from Acanthamoeba polyphaga mimivirus (APMV).